The chain runs to 567 residues: GBF-interacting protein 1 (567 aa).

Disordered regions lie at residues 70–150 (ERKK…PSGI), 164–192 (DKVD…SKES), and 545–567 (PIGP…GNNY). Polar residues-rich tracts occupy residues 91-102 (FASSYTDASNGR) and 121-136 (TASS…TKPS). A compositionally biased stretch (basic and acidic residues) spans 182 to 191 (DVVEPDKSKE). Over residues 550 to 567 (HVTNQQPQAARTNLGNNY) the composition is skewed to polar residues.

Belongs to the GIP1 family. As to quaternary structure, monomer, homodimer, homooligomer. Under non-reducing conditions, predominantly present in high molecular weight forms, but predominates in low molecular weight monomers under reducing conditions. Interacts with BZIP16, BZIP68 and GBF1. Interacts with LBD18. As to expression, expressed in roots, leaves, stems and flowers.

It localises to the nucleus. In terms of biological role, plant specific protein that enhances G-box-binding factor (GBF) DNA binding activity. May function as a nuclear chaperone or lever and regulate the multimeric state of GBFs. May contribute to bZIP-mediated gene regulation. Is able to refold denatured rhodanese in vitro. Reduces DNA-binding activity of BZIP16, BZIP68 and GBF1 under non-reducing conditions through direct physical interaction. Acts as a negative co-regulator in red and blue light-mediated hypocotyl elongation. Functions to promote hypocotyl elongation during the early stages of seedling development by regulating the repression effect by BZIP16 and the activation effect by BZIP68 and GBF1 on LHCB2.4 expression. Enhances transcriptional activity of LBD18 in the EXP14 promoter. May act as a transcriptional coactivator of LBD18. The protein is GBF-interacting protein 1 of Arabidopsis thaliana (Mouse-ear cress).